The following is a 347-amino-acid chain: Globoside alpha-1,3-N-acetylgalactosaminyltransferase 1 (347 aa).

At 1–6 (MTRPRL) the chain is on the cytoplasmic side. A helical; Signal-anchor for type II membrane protein transmembrane segment spans residues 7-27 (AQGLAFFLLGGTGLWVLWKFI). Topologically, residues 28-347 (KDWLLVSYIP…VKKNANWLRT (320 aa)) are lumenal. N-linked (GlcNAc...) asparagine glycosylation occurs at N108. Substrate contacts are provided by residues 116–121 (FAVGKY), 206–208 (DVD), and 228–231 (HPGY). The Mn(2+) site is built by D206 and D208. Catalysis depends on E298, which acts as the Nucleophile.

It belongs to the glycosyltransferase 6 family. Mn(2+) serves as cofactor.

The protein localises to the golgi apparatus membrane. The enzyme catalyses a globoside Gb4Cer (d18:1(4E)) + UDP-N-acetyl-alpha-D-galactosamine = a globoside Forssman (d18:1(4E)) + UDP + H(+). It carries out the reaction a globoside Gb4Cer + UDP-N-acetyl-alpha-D-galactosamine = a globoside IV3GalNAc-Gb4Cer + UDP + H(+). Its pathway is protein modification; protein glycosylation. Its function is as follows. Catalyzes the formation of Forssman glycolipid via the addition of N-acetylgalactosamine (GalNAc) in alpha-1,3-linkage to GalNAcb-1,3Gala-1,4Galb-1,4GlcCer (Gb4Cer). Forssman glycolipid (also called Forssman antigen; FG) probably serves for adherence of some pathogens. Conversely, it diminishes Shiga toxins susceptibility. The sequence is that of Globoside alpha-1,3-N-acetylgalactosaminyltransferase 1 from Mus musculus (Mouse).